We begin with the raw amino-acid sequence, 878 residues long: NUT family member 2E (878 aa).

5 disordered regions span residues 273-324, 417-511, 527-560, 622-757, and 775-878; these read WSQG…DDSC, QKSQ…VPEE, LLGP…PPDP, RLPP…EEEE, and WLPQ…HCSQ. Composition is skewed to pro residues over residues 278–288 and 427–444; these read PLPPPPPPAAQ and CLPP…PPAP. Basic and acidic residues-rich tracts occupy residues 537–551 and 622–631; these read EPEK…KQPQ and RLPPLKEKQH.

This sequence belongs to the NUT family.

This chain is NUT family member 2E (NUTM2E), found in Homo sapiens (Human).